Here is a 1271-residue protein sequence, read N- to C-terminus: SR-related and CTD-associated factor 8 (1271 aa).

One can recognise a CID domain in the interval 1–139; that stretch reads MEAVKTFNSE…PLLDMAAGIP (139 aa). A Phosphothreonine modification is found at Thr6. Lys18 is covalently cross-linked (Glycyl lysine isopeptide (Lys-Gly) (interchain with G-Cter in SUMO1)). The span at 270–283 shows a compositional bias: basic and acidic residues; it reads GEDSEHSEEPKKEI. Disordered stretches follow at residues 270-289, 322-354, and 384-468; these read GEDS…SQLS, QQQP…SQQH, and EEVF…PPIR. Ser273 carries the post-translational modification Phosphoserine. A compositionally biased stretch (polar residues) spans 327 to 354; sequence KATPQDSQEGTFGSEHSASPSQGSSQQH. Residues 394–443 are compositionally biased toward basic residues; that stretch reads VAVRSRSRTHSRSRSRSPRKRRSRSRSGSRKRKHRKRSRSRSRERKRKSS. Positions 447 to 461 are enriched in basic and acidic residues; the sequence is SSERRAREREKERQK. Residues 477-551 form the RRM domain; the sequence is TTLWVGQVDK…KVIKIAWALN (75 aa). The residue at position 615 (Thr615) is a Phosphothreonine. Phosphoserine occurs at positions 617 and 779. The disordered stretch occupies residues 899 to 918; that stretch reads TQPPAGPQNLPPLSIPNQRM. The segment covering 902–912 has biased composition (pro residues); that stretch reads PAGPQNLPPLS. Residues Arg917, Arg927, and Arg938 each carry the asymmetric dimethylarginine modification. 2 stretches are compositionally biased toward pro residues: residues 945-956 and 963-972; these read GIPPQRGIPPPS and HPPPRGPFPP. The segment at 945-1064 is disordered; sequence GIPPQRGIPP…DGRDHFGRPP (120 aa). 2 stretches are compositionally biased toward basic and acidic residues: residues 1011 to 1027 and 1034 to 1064; these read EGDR…RESI and DVRD…GRPP. Arg1073 carries the asymmetric dimethylarginine modification. The segment at 1198–1271 is disordered; the sequence is YFEGATSQRK…VVESTETEGT (74 aa). Residues 1255–1271 show a composition bias toward acidic residues; sequence ADIESEPVVESTETEGT.

In terms of assembly, interacts with POLR2A; via C-terminal heptapeptide repeat domain (CTD) phosphorylated at 'Ser-2' and 'Ser-5'. Identified in a complex with CDC5L and other spliceosomal proteins.

It is found in the nucleus. The protein resides in the nucleus matrix. Its function is as follows. Anti-terminator protein required to prevent early mRNA termination during transcription. Together with SCAF4, acts by suppressing the use of early, alternative poly(A) sites, thereby preventing the accumulation of non-functional truncated proteins. Mechanistically, associates with the phosphorylated C-terminal heptapeptide repeat domain (CTD) of the largest RNA polymerase II subunit (POLR2A), and subsequently binds nascent RNA upstream of early polyadenylation sites to prevent premature mRNA transcript cleavage and polyadenylation. Independently of SCAF4, also acts as a positive regulator of transcript elongation. This chain is SR-related and CTD-associated factor 8, found in Homo sapiens (Human).